The chain runs to 610 residues: Phosphomethylpyrimidine synthase (610 aa).

Residues asparagine 216, methionine 245, tyrosine 274, histidine 310, 330–332, 371–374, and glutamate 410 contribute to the substrate site; these read SRG and DGLR. Histidine 414 contributes to the Zn(2+) binding site. A substrate-binding site is contributed by tyrosine 437. Histidine 478 contacts Zn(2+). [4Fe-4S] cluster-binding residues include cysteine 558, cysteine 561, and cysteine 566.

The protein belongs to the ThiC family. As to quaternary structure, homodimer. [4Fe-4S] cluster is required as a cofactor.

It carries out the reaction 5-amino-1-(5-phospho-beta-D-ribosyl)imidazole + S-adenosyl-L-methionine = 4-amino-2-methyl-5-(phosphooxymethyl)pyrimidine + CO + 5'-deoxyadenosine + formate + L-methionine + 3 H(+). The protein operates within cofactor biosynthesis; thiamine diphosphate biosynthesis. In terms of biological role, catalyzes the synthesis of the hydroxymethylpyrimidine phosphate (HMP-P) moiety of thiamine from aminoimidazole ribotide (AIR) in a radical S-adenosyl-L-methionine (SAM)-dependent reaction. The protein is Phosphomethylpyrimidine synthase of Allorhizobium ampelinum (strain ATCC BAA-846 / DSM 112012 / S4) (Agrobacterium vitis (strain S4)).